The chain runs to 461 residues: Eukaryotic translation initiation factor 3 subunit M (461 aa).

Positions 42-61 (LLEPLRQQEQSDAEPDRKQR) are disordered. The 172-residue stretch at 205–376 (DQELAQTHVV…SEFLVHRATY (172 aa)) folds into the PCI domain. The interval 422 to 461 (AAEEAAQGKSGDKKGDRRQRRDQPQQSQPAPEAATAVAAE) is disordered. Residues 431 to 444 (SGDKKGDRRQRRDQ) show a composition bias toward basic and acidic residues. Residues 445–461 (PQQSQPAPEAATAVAAE) are compositionally biased toward low complexity.

The protein belongs to the eIF-3 subunit M family. As to quaternary structure, component of the eukaryotic translation initiation factor 3 (eIF-3) complex.

Its subcellular location is the cytoplasm. Functionally, component of the eukaryotic translation initiation factor 3 (eIF-3) complex, which is involved in protein synthesis of a specialized repertoire of mRNAs and, together with other initiation factors, stimulates binding of mRNA and methionyl-tRNAi to the 40S ribosome. The eIF-3 complex specifically targets and initiates translation of a subset of mRNAs involved in cell proliferation. The polypeptide is Eukaryotic translation initiation factor 3 subunit M (Aspergillus terreus (strain NIH 2624 / FGSC A1156)).